A 217-amino-acid chain; its full sequence is Protein MODIFYING WALL LIGNIN-2 (217 aa).

The first 23 residues, 1–23 (MHNLFLYSVVFSLGLVSFITCFA), serve as a signal peptide directing secretion. The Cytoplasmic portion of the chain corresponds to 24-51 (AEFKRTQKEDIRWDTERNCYVPGSHAFG). A helical membrane pass occupies residues 52 to 72 (LGSAAVLCFCLAQIVGNIVVF). At 73 to 94 (RNHRTRTKREDGYKITDLTLPT) the chain is on the extracellular side. A helical transmembrane segment spans residues 95–115 (VLLLLSWSNFVVVVLILSTAI). At 116–137 (SMSRAQAYGEGWLDEDCYLVKD) the chain is on the cytoplasmic side. The chain crosses the membrane as a helical span at residues 138–158 (GVFAASGCLAILGLGALTISA). At 159–217 (TRIKVKKQQQLVQVVIKDQNQDQRRSMEEEQKHDEHQTNKSESVIHLVEEVSSTNISRI) the chain is on the extracellular side. 2 N-linked (GlcNAc...) asparagine glycosylation sites follow: Asn197 and Asn213.

It belongs to the DESIGUAL family.

The protein resides in the cell membrane. In terms of biological role, together with MWL1, contributes to secondary cell wall biology, specifically lignin biosynthesis. The protein is Protein MODIFYING WALL LIGNIN-2 of Arabidopsis thaliana (Mouse-ear cress).